Consider the following 159-residue polypeptide: UPF0178 protein AZC_4000 (159 aa).

This sequence belongs to the UPF0178 family.

The chain is UPF0178 protein AZC_4000 from Azorhizobium caulinodans (strain ATCC 43989 / DSM 5975 / JCM 20966 / LMG 6465 / NBRC 14845 / NCIMB 13405 / ORS 571).